Consider the following 435-residue polypeptide: Xylose isomerase (435 aa).

Residues histidine 99 and aspartate 102 contribute to the active site. Residues glutamate 230, glutamate 266, histidine 269, aspartate 294, aspartate 305, aspartate 307, and aspartate 337 each coordinate Mg(2+).

This sequence belongs to the xylose isomerase family. Homotetramer. It depends on Mg(2+) as a cofactor.

Its subcellular location is the cytoplasm. It carries out the reaction alpha-D-xylose = alpha-D-xylulofuranose. The protein is Xylose isomerase of Listeria welshimeri serovar 6b (strain ATCC 35897 / DSM 20650 / CCUG 15529 / CIP 8149 / NCTC 11857 / SLCC 5334 / V8).